A 239-amino-acid polypeptide reads, in one-letter code: MDTVGLFSAEVEHLFIEWIKKHIKKGDLTLFERFFKADPWIVNRCDRSKITVFMWICIYGRLDFLRFLFKQESYPGEIISHYRRDKDGNSVWHYLAEKKNHLLLEEVLEYFGKIGIKVCFRNFNGITPVMKAAMRGRTLSVLSLIKYGANPNQKDYLKGFNTWDWAVFTGHADLVKSLNKDYQKPLFMHFPLYKLDVFHRRHKKKPKIIITSCEDNVYEKLPEQNPNFLCVKKLNKYGK.

4 ANK repeats span residues 48–80 (SKIT…EIIS), 87–118 (DGNS…GIKV), 124–153 (NGIT…NPNQ), and 158–187 (KGFN…KPLF). The short motif at 81 to 87 (HYRRDKD) is the Nuclear localization signal element. A Nuclear localization signal motif is present at residues 203–214 (KKKPKIIITSCE). A PxIxITxC motif; Interaction with host PPP3CA motif is present at residues 206–213 (PKIIITSC). Residues 228–231 (FLCV) carry the FLCV motif motif.

The protein belongs to the asfivirus A238L family. In terms of assembly, interacts with host PPIA. Interacts with host PPP3CA/Calcineurin. Interacts with host RELA/p65; interaction of the 32 kDa form with host RELA results in the formation of a stable complex with NF-kappa-B. Interacts with host PPP3R1. Interacts with host EP300; this interaction inhibits the association of host EP300 with host RELA, JUN and NFATC2. Post-translationally, the protein exists in a 28 kDa and a 32 kDa form, probably due to post-translational modifications which are neither phosphorylation, nor sumoylation.

The protein localises to the host nucleus. It is found in the host cytoplasm. IkB-like protein that inhibits the binding of NF-kappa-B to DNA, thereby downregulating pro-inflammatory cytokine production. Forms a heterodimer with the NF-kappa-B subunit RELA/p65 and prevents the activation of the NF-kappa-B transcription factor. Inhibits calcineurin function, which is required for the induction of nuclear factor of activated T cells (NFAT)-dependent immune response genes. Prevents the binding of substrates to calcineurin without affecting the phosphatase activity. Does not contain the serine residues that are phosphorylated by host IkB kinase and thus is not degraded following stimulation of the NFkB pathway. The sequence is that of IkB-like protein (A238L) from Ornithodoros (relapsing fever ticks).